The sequence spans 1601 residues: Polycomb group protein Psc (1601 aa).

Disordered regions lie at residues 1 to 91 and 165 to 245; these read MMTP…TTTT and NGIK…DLAT. 2 stretches are compositionally biased toward low complexity: residues 8–91 and 182–198; these read AIQP…TTTT and SSSS…SSSS. Over residues 199–215 the composition is skewed to polar residues; that stretch reads WPTTRRATSEDASSNGG. Positions 228 to 245 are enriched in low complexity; sequence TAAVAASSTATTTSDLAT. The segment at 263–302 adopts an RING-type zinc-finger fold; it reads CHLCQGYLINATTIVECLHSFCHSCLINHLRKERFCPRCE. Disordered stretches follow at residues 561 to 693, 711 to 856, 895 to 960, 1011 to 1097, 1116 to 1315, 1330 to 1408, and 1512 to 1601; these read KREK…FSED, VESP…NRTP, IGGG…SNNY, YKYT…EKQQ, SITI…LAPK, NPAA…HPVM, and AATG…TKSK. Positions 567–590 are enriched in low complexity; that stretch reads SPQMSSKSSSKSSPCTPVSSPSEP. Residues 611-637 show a composition bias toward basic and acidic residues; that stretch reads DPERREIVKPLKPEKESRSKKKDKDGS. Residues 638–649 show a composition bias toward low complexity; sequence PKSSSSSSSSSS. Phosphoserine is present on residues Ser-656 and Ser-658. A compositionally biased stretch (polar residues) spans 676 to 689; sequence SGVSTLSPRVTSGA. Residues 729 to 739 show a composition bias toward low complexity; sequence SVQQSASPKSK. Residues 812-822 show a composition bias toward pro residues; sequence LMPPPAKPPML. The segment covering 929–938 has biased composition (polar residues); sequence TTPSQGNKNV. Positions 1011–1022 are enriched in low complexity; the sequence is YKYTPKPTPNSG. The span at 1036–1045 shows a compositional bias: gly residues; it reads LGGGNGGSLG. The span at 1069-1085 shows a compositional bias: low complexity; sequence SSATQSGGNNGIVNNNI. Residues 1116-1133 show a composition bias toward polar residues; it reads SITISRDNGDSSSPNNGQ. At Ser-1139 the chain carries Phosphoserine. The segment covering 1204-1217 has biased composition (pro residues); it reads PQLPKVATPPPPSS. 3 positions are modified to phosphothreonine: Thr-1222, Thr-1236, and Thr-1251. Residues 1247–1258 are compositionally biased toward basic and acidic residues; the sequence is VDKKTPSPEKRT. A phosphoserine mark is found at Ser-1253, Ser-1266, and Ser-1274. Over residues 1261–1272 the composition is skewed to polar residues; that stretch reads QMGSHSPTASEN. Polar residues-rich tracts occupy residues 1352–1375 and 1561–1587; these read QSGQ…SPPA and APQT…NNGA.

In terms of assembly, component of PRC1 complex, which contains many PcG proteins like Pc, ph, Scm, Psc, Sce and also chromatin-remodeling proteins such as histone deacetylases. This complex is distinct from the Esc/E(z) complex, at least composed of esc, E(z), Su(z)12, HDAC1/Rpd3 and Caf1-55. The 2 complexes however cooperate and interact together during the first 3 hours of development to establish PcG silencing.

The protein resides in the nucleus. Its function is as follows. Polycomb group (PcG) protein. PcG proteins act by forming multiprotein complexes, which are required to maintain the transcriptionally repressive state of homeotic genes throughout development. PcG proteins are not required to initiate repression, but to maintain it during later stages of development. Component of the PcG multiprotein PRC1 complex, a complex that acts via chromatin remodeling and modification of histones; it mediates monoubiquitination of histone H2A 'Lys-118', rendering chromatin heritably changed in its expressibility. Needed to maintain expression patterns of the homeotic selector genes of the Antennapedia (Antp-C) and Bithorax (BX-C) complexes, and hence for the maintenance of segmental determination. In Drosophila melanogaster (Fruit fly), this protein is Polycomb group protein Psc (Psc).